The sequence spans 299 residues: Ribosomal protein L11 methyltransferase (299 aa).

Residues T152, G172, D194, and N234 each coordinate S-adenosyl-L-methionine.

It belongs to the methyltransferase superfamily. PrmA family.

It localises to the cytoplasm. It catalyses the reaction L-lysyl-[protein] + 3 S-adenosyl-L-methionine = N(6),N(6),N(6)-trimethyl-L-lysyl-[protein] + 3 S-adenosyl-L-homocysteine + 3 H(+). Functionally, methylates ribosomal protein L11. This Geobacter sulfurreducens (strain ATCC 51573 / DSM 12127 / PCA) protein is Ribosomal protein L11 methyltransferase.